Consider the following 401-residue polypeptide: L-rhamnonate dehydratase (401 aa).

Residues H29 and R55 each coordinate substrate. Positions 222, 248, and 276 each coordinate Mg(2+). H325 acts as the Proton acceptor in catalysis. A substrate-binding site is contributed by E345.

It belongs to the mandelate racemase/muconate lactonizing enzyme family. RhamD subfamily. In terms of assembly, homooctamer; tetramer of dimers. It depends on Mg(2+) as a cofactor.

The catalysed reaction is L-rhamnonate = 2-dehydro-3-deoxy-L-rhamnonate + H2O. Functionally, catalyzes the dehydration of L-rhamnonate to 2-keto-3-deoxy-L-rhamnonate (KDR). The chain is L-rhamnonate dehydratase from Tolumonas auensis (strain DSM 9187 / NBRC 110442 / TA 4).